We begin with the raw amino-acid sequence, 152 residues long: Adrenodoxin-like protein 2, mitochondrial (152 aa).

The transit peptide at Met-1–Phe-29 directs the protein to the mitochondrion. The 2Fe-2S ferredoxin-type domain maps to Val-41–Ile-146. Cys-80, Cys-86, Cys-89, and Cys-127 together coordinate [2Fe-2S] cluster.

Belongs to the adrenodoxin/putidaredoxin family. It depends on [2Fe-2S] cluster as a cofactor.

The protein resides in the mitochondrion. Required for ecdysteroidogenesis in the prothoracic gland which is necessary for larval to pupal transition. In Drosophila melanogaster (Fruit fly), this protein is Adrenodoxin-like protein 2, mitochondrial.